Reading from the N-terminus, the 331-residue chain is L-lactate dehydrogenase A chain (331 aa).

NAD(+)-binding positions include 29-57 (GMVGMASAISILLKDLCDELAMVDVMEDK) and Arg-98. Arg-105, Asn-137, and Arg-168 together coordinate substrate. Asn-137 contributes to the NAD(+) binding site. The active-site Proton acceptor is the His-192. Thr-247 contacts substrate.

It belongs to the LDH/MDH superfamily. LDH family. In terms of assembly, homotetramer.

It is found in the cytoplasm. The catalysed reaction is (S)-lactate + NAD(+) = pyruvate + NADH + H(+). It participates in fermentation; pyruvate fermentation to lactate; (S)-lactate from pyruvate: step 1/1. Functionally, interconverts simultaneously and stereospecifically pyruvate and lactate with concomitant interconversion of NADH and NAD(+). This chain is L-lactate dehydrogenase A chain (ldha), found in Notothenia angustata (Rockcod).